Here is a 136-residue protein sequence, read N- to C-terminus: Large ribosomal subunit protein uL16c (136 aa).

The protein belongs to the universal ribosomal protein uL16 family. Part of the 50S ribosomal subunit.

It localises to the plastid. The protein resides in the chloroplast. The sequence is that of Large ribosomal subunit protein uL16c from Mesostigma viride (Green alga).